Consider the following 1073-residue polypeptide: Pharyngeal muscle protein 2 (1073 aa).

One can recognise an SAP domain in the interval 9–43 (INDLRVSELKTELEKRGLSTQGVKVVLTVRLNKAL). 3 disordered regions span residues 59–186 (VSPM…PEVV), 207–305 (ELKE…SMET), and 337–388 (LLED…KSML). Over residues 91–111 (EGNDENVLVEEKEEEEEEEDS) the composition is skewed to acidic residues. Residues 112 to 127 (HDLQIIEDHELEVPSD) show a composition bias toward basic and acidic residues. Residues 128–151 (EKDDTLVEDEEFEEAEQVEPEPEA) show a composition bias toward acidic residues. Basic and acidic residues-rich tracts occupy residues 156 to 182 (VEEK…KPVE) and 207 to 217 (ELKEKPEKEPE). 2 stretches are compositionally biased toward acidic residues: residues 223-232 (EPVEQLENEP) and 248-265 (QDGE…DIEI). Positions 277–293 (AEEKVEKKEKKPEEIPH) are enriched in basic and acidic residues. Positions 366–386 (ASTPQATPSKAASSSAGSGKS) are enriched in low complexity. An RRM domain is found at 396-478 (TSIWIRGMTP…RVLRVEKVSE (83 aa)). Disordered stretches follow at residues 481 to 759 (LTSS…ERRR), 845 to 917 (QEHR…RNLV), and 1015 to 1073 (SQNA…RGNY). Low complexity-rich tracts occupy residues 496 to 505 (EAASTMSTSP) and 513 to 524 (PVVTTTTTTSAA). Positions 573 to 587 (ITFDREEESNRDSRR) are enriched in basic and acidic residues. Positions 588 to 622 (TIAAAPPARTSRMARSPLRAPLRAARGSESSRSST) are enriched in low complexity. Polar residues predominate over residues 674 to 689 (VTVQQDAPRASYQTEQ). 2 stretches are compositionally biased toward basic and acidic residues: residues 707–727 (VSPD…RRAP) and 742–759 (PPRR…ERRR). Low complexity-rich tracts occupy residues 901 to 917 (SSSN…RNLV), 1015 to 1026 (SQNAATPSTSTS), and 1034 to 1060 (QWQQ…SSSN).

Expressed in most tissues including the hypodermal, muscle, neuronal, vulval and intestinal tissues. Isoform a: Expressed in the pharynx, nerve ring, intestine, neurons and ventral nerve cord.

The protein resides in the nucleus. Its function is as follows. Involved in pharyngeal muscle development and ensures pharyngeal grinder function during feeding. Plays a role in the defense against the accumulation of ingested live pathogenic bacteria in the intestine. Has a role in the determination of life span. The sequence is that of Pharyngeal muscle protein 2 from Caenorhabditis elegans.